The primary structure comprises 179 residues: Large ribosomal subunit protein uL6c (179 aa).

The protein belongs to the universal ribosomal protein uL6 family. In terms of assembly, part of the 50S ribosomal subunit.

It is found in the plastid. Its subcellular location is the cyanelle. Binds 23S rRNA. In Cyanophora paradoxa, this protein is Large ribosomal subunit protein uL6c (rpl6).